A 361-amino-acid polypeptide reads, in one-letter code: MRMVFRWFGAGNDSVSLAHIRQIPGVEGIVWALHDIPPGEVWPLSRIMEIKEQAEQHQFHIDVVESVNVHEDIKLGLPTRDRYIEAYKQTIKHLAKAGVKVICYNFMPVFDWVRTDLYKKLEDGSTALFYEKKEVDEMNPKGLVETIASNKTFTMPGWEPERLASLKTLFEAYEHVSTEDLWDHLHYFLQEVIPVAEACDIKMAIHPDDPPWPIFGLPRIVTNHDNIRRLLKLVDHPTNGITLCSGALGADPNNQVPEMIREFADRIPFAHIRNIKRFDNGDFVETSHREQDGSIDIVSIVKAYHEVGFTGYVRPDHGRHIWDEQCRPGYGLYDRALGIMYLWGIWDSVQNGQRMHDLTAK.

It belongs to the mannonate dehydratase family. Fe(2+) serves as cofactor. The cofactor is Mn(2+).

The enzyme catalyses D-mannonate = 2-dehydro-3-deoxy-D-gluconate + H2O. It participates in carbohydrate metabolism; pentose and glucuronate interconversion. Its function is as follows. Catalyzes the dehydration of D-mannonate. The polypeptide is Mannonate dehydratase 1 (uxuA1) (Halalkalibacterium halodurans (strain ATCC BAA-125 / DSM 18197 / FERM 7344 / JCM 9153 / C-125) (Bacillus halodurans)).